Here is a 215-residue protein sequence, read N- to C-terminus: 3-demethoxyubiquinol 3-hydroxylase (215 aa).

Fe cation contacts are provided by Glu64, Glu94, His97, Glu146, Glu178, and His181.

It belongs to the COQ7 family. Fe cation is required as a cofactor.

It localises to the cell membrane. It catalyses the reaction a 5-methoxy-2-methyl-3-(all-trans-polyprenyl)benzene-1,4-diol + AH2 + O2 = a 3-demethylubiquinol + A + H2O. Its pathway is cofactor biosynthesis; ubiquinone biosynthesis. Functionally, catalyzes the hydroxylation of 2-nonaprenyl-3-methyl-6-methoxy-1,4-benzoquinol during ubiquinone biosynthesis. The protein is 3-demethoxyubiquinol 3-hydroxylase of Pseudomonas fluorescens (strain ATCC BAA-477 / NRRL B-23932 / Pf-5).